The primary structure comprises 331 residues: 6-phosphogluconolactonase (331 aa).

This sequence belongs to the cycloisomerase 2 family.

The catalysed reaction is 6-phospho-D-glucono-1,5-lactone + H2O = 6-phospho-D-gluconate + H(+). Its pathway is carbohydrate degradation; pentose phosphate pathway; D-ribulose 5-phosphate from D-glucose 6-phosphate (oxidative stage): step 2/3. In terms of biological role, catalyzes the hydrolysis of 6-phosphogluconolactone to 6-phosphogluconate. In Salmonella agona (strain SL483), this protein is 6-phosphogluconolactonase.